A 599-amino-acid polypeptide reads, in one-letter code: Elongation factor 4 (599 aa).

Residues 5–187 (NHIRNFSIIA…QIVQLVPPPE (183 aa)) enclose the tr-type G domain. GTP-binding positions include 17–22 (DHGKST) and 134–137 (NKMD).

It belongs to the TRAFAC class translation factor GTPase superfamily. Classic translation factor GTPase family. LepA subfamily.

It localises to the cell inner membrane. It carries out the reaction GTP + H2O = GDP + phosphate + H(+). Its function is as follows. Required for accurate and efficient protein synthesis under certain stress conditions. May act as a fidelity factor of the translation reaction, by catalyzing a one-codon backward translocation of tRNAs on improperly translocated ribosomes. Back-translocation proceeds from a post-translocation (POST) complex to a pre-translocation (PRE) complex, thus giving elongation factor G a second chance to translocate the tRNAs correctly. Binds to ribosomes in a GTP-dependent manner. The chain is Elongation factor 4 from Hahella chejuensis (strain KCTC 2396).